The primary structure comprises 185 residues: Ribose 1,5-bisphosphate phosphokinase PhnN (185 aa).

ATP is bound at residue 13 to 20 (GPSGAGKD).

The protein belongs to the ribose 1,5-bisphosphokinase family.

The catalysed reaction is alpha-D-ribose 1,5-bisphosphate + ATP = 5-phospho-alpha-D-ribose 1-diphosphate + ADP. It participates in metabolic intermediate biosynthesis; 5-phospho-alpha-D-ribose 1-diphosphate biosynthesis; 5-phospho-alpha-D-ribose 1-diphosphate from D-ribose 5-phosphate (route II): step 3/3. Functionally, catalyzes the phosphorylation of ribose 1,5-bisphosphate to 5-phospho-D-ribosyl alpha-1-diphosphate (PRPP). In Chromobacterium violaceum (strain ATCC 12472 / DSM 30191 / JCM 1249 / CCUG 213 / NBRC 12614 / NCIMB 9131 / NCTC 9757 / MK), this protein is Ribose 1,5-bisphosphate phosphokinase PhnN.